The chain runs to 770 residues: Transferrin receptor protein 1 (770 aa).

Topologically, residues 1-70 are cytoplasmic; it reads MMDQARSAFS…KPKRCNGFIC (70 aa). The segment at 1 to 70 is mediates interaction with SH3BP4; that stretch reads MMDQARSAFS…KPKRCNGFIC (70 aa). Phosphoserine is present on residues S10 and S19. At Y20 the chain carries Phosphotyrosine. An Endocytosis signal motif is present at residues 20 to 23; it reads YTRF. T21 is subject to Phosphothreonine. Phosphoserine is present on S24. Positions 61–64 match the Stop-transfer sequence motif; the sequence is KPKR. S-palmitoyl cysteine attachment occurs at residues C65 and C70. Residues 71-90 traverse the membrane as a helical; Signal-anchor for type II membrane protein segment; sequence YGTIAVVLFFLIGFMIGYLG. Residues 91–770 are Extracellular-facing; the sequence is YCKRVEPKAG…GDIWDIDNEF (680 aa). The segment at 102-122 is disordered; sequence ERPTGTEALGTERTEPSETEE. O-linked (GalNAc...) threonine glycosylation is present at T107. The PA domain occupies 233-323; sequence SKATTVTGRL…GTGDPYTPGF (91 aa). N-linked (GlcNAc...) asparagine glycosylation is found at N261, N327, and N384. The ligand-binding stretch occupies residues 579 to 770; sequence TMDLYENLNQ…GDIWDIDNEF (192 aa). The Cell attachment site signature appears at 656–658; that stretch reads RGD. 2 N-linked (GlcNAc...) asparagine glycosylation sites follow: N732 and N737.

Belongs to the peptidase M28 family. M28B subfamily. Homodimer; disulfide-linked. Binds one transferrin molecule per subunit. Interacts with SH3BP4. Interacts with STEAP3; facilitates TFRC endocytosis in erythroid precursor cells. In terms of processing, stearoylated by ZDHHC6 which inhibits TFRC-mediated activation of the JNK pathway and promotes mitochondrial fragmentation. Stearoylation does not affect iron uptake. N- and O-glycosylated, phosphorylated and palmitoylated.

It is found in the cell membrane. It localises to the melanosome. Cellular uptake of iron occurs via receptor-mediated endocytosis of ligand-occupied transferrin receptor into specialized endosomes. Endosomal acidification leads to iron release. The apotransferrin-receptor complex is then recycled to the cell surface with a return to neutral pH and the concomitant loss of affinity of apotransferrin for its receptor. Transferrin receptor is necessary for development of erythrocytes and the nervous system. Positively regulates T and B cell proliferation through iron uptake. Acts as a lipid sensor that regulates mitochondrial fusion by regulating activation of the JNK pathway. When dietary levels of stearate (C18:0) are low, promotes activation of the JNK pathway, resulting in HUWE1-mediated ubiquitination and subsequent degradation of the mitofusin MFN2 and inhibition of mitochondrial fusion. When dietary levels of stearate (C18:0) are high, TFRC stearoylation inhibits activation of the JNK pathway and thus degradation of the mitofusin MFN2. Mediates uptake of NICOL1 into fibroblasts where it may regulate extracellular matrix production. This is Transferrin receptor protein 1 (TFRC) from Canis lupus familiaris (Dog).